The primary structure comprises 739 residues: Putative apoptosis-inducing factor 1, mitochondrial (739 aa).

The transit peptide at 1–42 directs the protein to the mitochondrion; it reads MSIWGVRCLTQRFIRQAYILANRRLLGPVPQRSPPAYAPLRP. The tract at residues 257–564 is FAD-dependent oxidoreductase; the sequence is YLIIGGGTAA…ARRNLYVAGD (308 aa). FAD is bound by residues 261–265, arginine 295, lysine 300, valine 358, arginine 410, aspartate 564, and 580–581; these read GGGTA and HH. The interval 644–681 is disordered; sequence VDQLSESSDSDVPETSTSSSQSSKSDAGASQDGVTCDP. Residues 656–676 are compositionally biased toward low complexity; sequence PETSTSSSQSSKSDAGASQDG.

The protein belongs to the FAD-dependent oxidoreductase family. Requires FAD as cofactor.

The protein resides in the mitochondrion intermembrane space. It carries out the reaction A + NADH + H(+) = AH2 + NAD(+). Functionally, probable NADH oxidoreductase. Mitochondrial effector of cell death that plays roles in developmentally regulated cell death and normal mitochondrial function. The polypeptide is Putative apoptosis-inducing factor 1, mitochondrial (AIF) (Drosophila melanogaster (Fruit fly)).